The following is a 344-amino-acid chain: GTP 3',8-cyclase (344 aa).

A Radical SAM core domain is found at 19 to 244 (PFGRTISYLR…MDLAESTGGP (226 aa)). Arginine 28 contacts GTP. [4Fe-4S] cluster contacts are provided by cysteine 35 and cysteine 39. Tyrosine 41 contributes to the S-adenosyl-L-methionine binding site. Cysteine 42 provides a ligand contact to [4Fe-4S] cluster. Arginine 77 contributes to the GTP binding site. Residue glycine 81 coordinates S-adenosyl-L-methionine. Threonine 111 is a GTP binding site. S-adenosyl-L-methionine is bound at residue serine 135. Lysine 171 lines the GTP pocket. Methionine 205 lines the S-adenosyl-L-methionine pocket. Residues cysteine 268 and cysteine 271 each coordinate [4Fe-4S] cluster. A GTP-binding site is contributed by 273 to 275 (RVR). Cysteine 285 contributes to the [4Fe-4S] cluster binding site.

The protein belongs to the radical SAM superfamily. MoaA family. In terms of assembly, monomer and homodimer. [4Fe-4S] cluster serves as cofactor.

It carries out the reaction GTP + AH2 + S-adenosyl-L-methionine = (8S)-3',8-cyclo-7,8-dihydroguanosine 5'-triphosphate + 5'-deoxyadenosine + L-methionine + A + H(+). Its pathway is cofactor biosynthesis; molybdopterin biosynthesis. In terms of biological role, catalyzes the cyclization of GTP to (8S)-3',8-cyclo-7,8-dihydroguanosine 5'-triphosphate. This is GTP 3',8-cyclase from Bradyrhizobium diazoefficiens (strain JCM 10833 / BCRC 13528 / IAM 13628 / NBRC 14792 / USDA 110).